Here is a 633-residue protein sequence, read N- to C-terminus: ABC transporter G family member 1 (633 aa).

In terms of domain architecture, ABC transporter spans 23–265 (LTWEDLWVTA…FALSGFPCPT (243 aa)). 60–67 (GPSGSGKS) contributes to the ATP binding site. The region spanning 340–552 (TQSLVLTRRS…AYEGMFKNEF (213 aa)) is the ABC transmembrane type-2 domain. N-linked (GlcNAc...) asparagine glycosylation occurs at Asn352. 6 helical membrane passes run 364-384 (LAVYVVIAVGLGSLYYDVGFS), 394-414 (MLMFVASFITFMAIGGFPSFV), 440-460 (LSAMPYLLLVSLIPGAIAYFM), 470-490 (FIYFALVLFTCMMIVESLMMI), 498-518 (FLMGLIAGAGIQALMLLSGGF), and 580-600 (IDLVILLGMLVLYRVLFLLVV).

Belongs to the ABC transporter superfamily. ABCG family. As to quaternary structure, homodimer. As to expression, restricted to the petals, with the highest expression in the limb and, to a lesser extent, in petal tubes, probably in both epidermal and mesophyll cell layers.

The protein localises to the cell membrane. Functionally, ABC transporter controlling the release of volatile organic compounds (VOCs), including floral volatile benzenoids and phenylpropanoids (FVBP), in flowers of fragrant cultivars (e.g. cv. Mitchell and cv. V26). This scent, mostly produced in the evening and night by the petals, attracts the pollinators (e.g. the night-active hawkmoth pollinator Manduca sexta). The sequence is that of ABC transporter G family member 1 from Petunia hybrida (Petunia).